We begin with the raw amino-acid sequence, 342 residues long: Glycerol-1-phosphate dehydrogenase [NAD(P)+] (342 aa).

NAD(+) is bound by residues 84 to 88 (GRPID) and 106 to 109 (TSAS). Asp111 is a binding site for substrate. Residue Ser115 coordinates NAD(+). Asp160 serves as a coordination point for substrate. The Zn(2+) site is built by Asp160 and His241. His245 contacts substrate. His260 provides a ligand contact to Zn(2+).

It belongs to the glycerol-1-phosphate dehydrogenase family. In terms of assembly, homodimer. Requires Zn(2+) as cofactor.

It localises to the cytoplasm. The enzyme catalyses sn-glycerol 1-phosphate + NAD(+) = dihydroxyacetone phosphate + NADH + H(+). It carries out the reaction sn-glycerol 1-phosphate + NADP(+) = dihydroxyacetone phosphate + NADPH + H(+). Its pathway is membrane lipid metabolism; glycerophospholipid metabolism. Functionally, catalyzes the NAD(P)H-dependent reduction of dihydroxyacetonephosphate (DHAP or glycerone phosphate) to glycerol 1-phosphate (G1P). The G1P thus generated is used as the glycerophosphate backbone of phospholipids in the cellular membranes of Archaea. This Pyrobaculum arsenaticum (strain DSM 13514 / JCM 11321 / PZ6) protein is Glycerol-1-phosphate dehydrogenase [NAD(P)+].